The following is a 345-amino-acid chain: Microtubule-associated protein Jupiter (345 aa).

Residues 1 to 14 (MISNFDCTDNQASS) are compositionally biased toward polar residues. Residues 1–34 (MISNFDCTDNQASSKVLRPPGGGSSDIFGSEMPQ) form a disordered region. Ser-24 carries the phosphoserine modification. At Thr-35 the chain carries Phosphothreonine. Residues 78–87 (QKTVDSHNRL) show a composition bias toward basic and acidic residues. Residues 78 to 100 (QKTVDSHNRLFGEPTRPITPGKN) are disordered. Residues Thr-92 and Thr-96 each carry the phosphothreonine modification. Ser-105, Ser-134, and Ser-145 each carry phosphoserine. Disordered regions lie at residues 127-241 (HYNG…QPHS) and 300-345 (EGNP…SGLW). Low complexity predominate over residues 132–145 (SGSVSSASSSVSSS). A compositionally biased stretch (polar residues) spans 146–164 (TENLKMNSGSRSVFRNMST). A compositionally biased stretch (pro residues) spans 177–191 (LCPPSPVRIEPPTPP). 2 stretches are compositionally biased toward polar residues: residues 212–226 (DNST…NEAC) and 315–326 (DYNQRQESSNAG).

This sequence belongs to the MAP Jupiter family.

It is found in the nucleus. Its subcellular location is the cytoplasm. It localises to the cytoskeleton. The protein localises to the spindle. Its function is as follows. Binds to all microtubule populations. The chain is Microtubule-associated protein Jupiter from Drosophila erecta (Fruit fly).